A 312-amino-acid chain; its full sequence is Tetraacyldisaccharide 4'-kinase (312 aa).

60-67 (IAGGSGKT) is a binding site for ATP.

This sequence belongs to the LpxK family.

The enzyme catalyses a lipid A disaccharide + ATP = a lipid IVA + ADP + H(+). The protein operates within glycolipid biosynthesis; lipid IV(A) biosynthesis; lipid IV(A) from (3R)-3-hydroxytetradecanoyl-[acyl-carrier-protein] and UDP-N-acetyl-alpha-D-glucosamine: step 6/6. Functionally, transfers the gamma-phosphate of ATP to the 4'-position of a tetraacyldisaccharide 1-phosphate intermediate (termed DS-1-P) to form tetraacyldisaccharide 1,4'-bis-phosphate (lipid IVA). This is Tetraacyldisaccharide 4'-kinase from Helicobacter pylori (strain ATCC 700392 / 26695) (Campylobacter pylori).